Reading from the N-terminus, the 316-residue chain is METWQELKVTVKREGEELVSNLLIELGAQGVAIEDSLDYVGNVDRFGEIFPEVEQQEEIVVTAYYPDTVDVTVVEADLQARISELTDFMDLGELKIGTTALAEEDWADNWKKYYEPARITHDLTIVPSWTDYEATAGEKIIKLDPGMAFGTGTHPTTKMSLFALEQVLRGGETVLDVGTGSGVLSIASSLLGAKEIFAYDLDDVAVRVAQENIELNPGMENIHVAAGDLLKGVEIEADVIVANILADILIHLIDDAYRLVKDEGYLIMSGIIKDKWDMVRESAESAGFFLETHMVQGEWNTCVFKKTKDISGVIGG.

S-adenosyl-L-methionine-binding residues include threonine 157, glycine 178, aspartate 200, and asparagine 243.

This sequence belongs to the methyltransferase superfamily. PrmA family.

It is found in the cytoplasm. It catalyses the reaction L-lysyl-[protein] + 3 S-adenosyl-L-methionine = N(6),N(6),N(6)-trimethyl-L-lysyl-[protein] + 3 S-adenosyl-L-homocysteine + 3 H(+). Its function is as follows. Methylates ribosomal protein L11. This chain is Ribosomal protein L11 methyltransferase, found in Streptococcus pneumoniae (strain JJA).